The sequence spans 419 residues: CCA-adding enzyme (419 aa).

Positions 8 and 11 each coordinate ATP. Residues Gly8 and Arg11 each contribute to the CTP site. Residues Asp21 and Asp23 each contribute to the Mg(2+) site. Residues Arg91, Arg137, and Arg140 each contribute to the ATP site. Arg91, Arg137, and Arg140 together coordinate CTP.

Belongs to the tRNA nucleotidyltransferase/poly(A) polymerase family. Bacterial CCA-adding enzyme type 2 subfamily. Mg(2+) is required as a cofactor.

The enzyme catalyses a tRNA precursor + 2 CTP + ATP = a tRNA with a 3' CCA end + 3 diphosphate. It catalyses the reaction a tRNA with a 3' CCA end + 2 CTP + ATP = a tRNA with a 3' CCACCA end + 3 diphosphate. Functionally, catalyzes the addition and repair of the essential 3'-terminal CCA sequence in tRNAs without using a nucleic acid template. Adds these three nucleotides in the order of C, C, and A to the tRNA nucleotide-73, using CTP and ATP as substrates and producing inorganic pyrophosphate. tRNA 3'-terminal CCA addition is required both for tRNA processing and repair. Also involved in tRNA surveillance by mediating tandem CCA addition to generate a CCACCA at the 3' terminus of unstable tRNAs. While stable tRNAs receive only 3'-terminal CCA, unstable tRNAs are marked with CCACCA and rapidly degraded. This is CCA-adding enzyme from Buchnera aphidicola subsp. Baizongia pistaciae (strain Bp).